The chain runs to 295 residues: Pyridoxal 5'-phosphate synthase subunit PdxS (295 aa).

Position 25 (D25) interacts with D-ribose 5-phosphate. K82 serves as the catalytic Schiff-base intermediate with D-ribose 5-phosphate. D-ribose 5-phosphate is bound at residue G154. R166 is a D-glyceraldehyde 3-phosphate binding site. Residues G215 and G236–S237 contribute to the D-ribose 5-phosphate site.

It belongs to the PdxS/SNZ family. In the presence of PdxT, forms a dodecamer of heterodimers.

The enzyme catalyses aldehydo-D-ribose 5-phosphate + D-glyceraldehyde 3-phosphate + L-glutamine = pyridoxal 5'-phosphate + L-glutamate + phosphate + 3 H2O + H(+). It functions in the pathway cofactor biosynthesis; pyridoxal 5'-phosphate biosynthesis. Its function is as follows. Catalyzes the formation of pyridoxal 5'-phosphate from ribose 5-phosphate (RBP), glyceraldehyde 3-phosphate (G3P) and ammonia. The ammonia is provided by the PdxT subunit. Can also use ribulose 5-phosphate and dihydroxyacetone phosphate as substrates, resulting from enzyme-catalyzed isomerization of RBP and G3P, respectively. The polypeptide is Pyridoxal 5'-phosphate synthase subunit PdxS (Bacillus cereus (strain B4264)).